Here is a 489-residue protein sequence, read N- to C-terminus: Pluviatolide synthase (489 aa).

The helical transmembrane segment at 6 to 26 (SVLAMSSTLILALAMALIFLF) threads the bilayer. Cys-432 provides a ligand contact to heme.

This sequence belongs to the cytochrome P450 family. Heme serves as cofactor. As to expression, expressed in leaves, rhizomes and stems.

It localises to the membrane. The enzyme catalyses (-)-matairesinol + reduced [NADPH--hemoprotein reductase] + O2 = (-)-pluviatolide + oxidized [NADPH--hemoprotein reductase] + 2 H2O + H(+). It participates in aromatic compound metabolism; phenylpropanoid biosynthesis. Cytochrome P450 involved in the biosynthesis of etoposide, a chemotherapeutic compound of the topoisomerase inhibitor family. Catalyzes the conversion of matairesinol to pluviatolide. The sequence is that of Pluviatolide synthase from Sinopodophyllum hexandrum (Himalayan may apple).